The primary structure comprises 121 residues: Cytochrome B5-like protein (121 aa).

The helical transmembrane segment at 1-21 (MIAVIGLLLGFLVSALFLIQG) threads the bilayer. Positions 24–49 (RRTNDNQEKKRSSSEPVEDVVRPKSY) are disordered. The span at 26 to 36 (TNDNQEKKRSS) shows a compositional bias: basic and acidic residues. One can recognise a Cytochrome b5 heme-binding domain in the interval 46 to 121 (PKSYSKSEVA…IEDFYIGELH (76 aa)). The heme site is built by H81 and H104.

The protein belongs to the cytochrome b5 family.

The protein localises to the membrane. The chain is Cytochrome B5-like protein from Arabidopsis thaliana (Mouse-ear cress).